Reading from the N-terminus, the 275-residue chain is Type III pantothenate kinase (275 aa).

9-16 (DIGNTRLK) contributes to the ATP binding site. Residues Tyr114 and 121–124 (GVDR) each bind substrate. The Proton acceptor role is filled by Asp123. Residue Thr147 coordinates ATP. Thr209 lines the substrate pocket.

Belongs to the type III pantothenate kinase family. As to quaternary structure, homodimer. Requires NH4(+) as cofactor. K(+) serves as cofactor.

The protein localises to the cytoplasm. The catalysed reaction is (R)-pantothenate + ATP = (R)-4'-phosphopantothenate + ADP + H(+). It functions in the pathway cofactor biosynthesis; coenzyme A biosynthesis; CoA from (R)-pantothenate: step 1/5. In terms of biological role, catalyzes the phosphorylation of pantothenate (Pan), the first step in CoA biosynthesis. This is Type III pantothenate kinase from Cupriavidus pinatubonensis (strain JMP 134 / LMG 1197) (Cupriavidus necator (strain JMP 134)).